Reading from the N-terminus, the 75-residue chain is U6-lycotoxin-Ls1d (75 aa).

Positions 1 to 21 (MKLLFFTALVLVVISLIEVEA) are cleaved as a signal peptide. The propeptide occupies 22-25 (ENER).

Belongs to the neurotoxin 19 (CSTX) family. 06 (U6-Lctx) subfamily. In terms of processing, contains 4 disulfide bonds. In terms of tissue distribution, expressed by the venom gland.

The protein resides in the secreted. This chain is U6-lycotoxin-Ls1d, found in Lycosa singoriensis (Wolf spider).